The sequence spans 336 residues: Tryptophan--tRNA ligase (336 aa).

ATP-binding positions include 9–11 and 17–18; these read QPS and GN. The short motif at 10 to 18 is the 'HIGH' region element; the sequence is PSGTPTIGN. D134 lines the L-tryptophan pocket. ATP contacts are provided by residues 146 to 148, I189, and 198 to 202; these read GDD and KMSKS. The short motif at 198–202 is the 'KMSKS' region element; sequence KMSKS.

The protein belongs to the class-I aminoacyl-tRNA synthetase family. Homodimer.

Its subcellular location is the cytoplasm. It carries out the reaction tRNA(Trp) + L-tryptophan + ATP = L-tryptophyl-tRNA(Trp) + AMP + diphosphate + H(+). In terms of biological role, catalyzes the attachment of tryptophan to tRNA(Trp). In Enterococcus faecalis (strain ATCC 700802 / V583), this protein is Tryptophan--tRNA ligase.